A 571-amino-acid polypeptide reads, in one-letter code: Chondroitin sulfate proteoglycan 5 (571 aa).

Residues 1 to 30 form the signal peptide; that stretch reads MGRAGGGGPGWGPPPVLLLLGVTLVLTAGA. At 31–428 the chain is on the extracellular side; sequence VPAREAGSAI…SIITDFQVMC (398 aa). Ser38 carries O-linked (Xyl...) (chondroitin sulfate) serine glycosylation. Asn57 carries an N-linked (GlcNAc...) asparagine glycan. The disordered stretch occupies residues 57 to 91; that stretch reads NDTREEAGLPAAGEDETSWTERGSELAAVGPGVGP. O-linked (GalNAc...) threonine glycosylation occurs at Thr76. Residue Ser123 is glycosylated (O-linked (Xyl...) (chondroitin sulfate) serine). O-linked (GalNAc...) threonine glycosylation occurs at Thr132. Disordered stretches follow at residues 137–169, 186–254, and 279–357; these read DEAL…KPSL, GGST…TPSW, and DDLE…DLAT. An O-linked (GalNAc...) serine glycan is attached at Ser143. Thr144 and Thr153 each carry an O-linked (GalNAc...) threonine glycan. Ser156 and Ser160 each carry an O-linked (GalNAc...) serine glycan. Residues Thr162 and Thr198 are each glycosylated (O-linked (GalNAc...) threonine). The span at 214 to 223 shows a compositional bias: acidic residues; that stretch reads IDIDYFEGLD. O-linked (GalNAc...) threonine glycosylation is present at Thr240. Residues 270–306 form an interaction with TNC and TNR region; sequence DFYPTTSFYDDLEEEEEEEEDKDAVGGGDLEDESDLL. The segment covering 279–291 has biased composition (acidic residues); it reads DDLEEEEEEEEDK. Thr318 and Thr322 each carry an O-linked (GalNAc...) threonine glycan. Asn372 is a glycosylation site (N-linked (GlcNAc...) asparagine). The 43-residue stretch at 376-418 folds into the EGF-like domain; that stretch reads RSVCDLFPSYCHNGGQCYLVENIGAFCRCNTQDYIWHKGMRCE. Disulfide bonds link Cys379–Cys392, Cys386–Cys402, and Cys404–Cys417. A helical transmembrane segment spans residues 429–449; it reads VAVGSAALVLLLLFMMTVFFA. The interaction with GOPC stretch occupies residues 447–465; sequence FFAKKLYLLKTENTKLRRT. Over 450-571 the chain is Cytoplasmic; it reads KKLYLLKTEN…EVNCLQNNLT (122 aa). A phosphoserine mark is found at Ser472, Ser480, Ser488, and Ser548. The interval 538–563 is disordered; it reads EESFNIQNSMSPKLEGGKGDQDDLEV.

Interacts with ERBB3 and GOPC. Binds TNR and probably TNC. Interacts with MDK; this interaction is independent of the presence of chondroitin sulfate chains and promotes elongation of oligodendroglial precursor-like cells. Post-translationally, N-glycosylated. In terms of processing, O-glycosylated; contains chondroitin sulfate glycans. Part-time proteoglycan, expressed in part as a proteoglycan exhibiting chondroitin sulfate glycans and in part as a non-proteoglycan form. The relative amount of both forms depends on tissues and tissue maturation. Phosphorylated; in intracellular and extracellular parts. Expressed in cerebral cortex and cerebellum. Expressed in retina (at protein level).

It is found in the cell membrane. It localises to the synaptic cell membrane. The protein localises to the endoplasmic reticulum membrane. The protein resides in the golgi apparatus membrane. Its subcellular location is the cell surface. It is found in the secreted. May function as a growth and differentiation factor involved in neuritogenesis. May induce ERBB3 activation. This is Chondroitin sulfate proteoglycan 5 (Cspg5) from Rattus norvegicus (Rat).